The primary structure comprises 141 residues: Hemoglobin subunit alpha (141 aa).

Positions 1-141 constitute a Globin domain; that stretch reads VLSPADKSNV…VSTVLTSKYR (141 aa). The residue at position 3 (Ser3) is a Phosphoserine. Residues Lys7 and Lys11 each carry the N6-succinyllysine modification. N6-acetyllysine; alternate is present on Lys16. At Lys16 the chain carries N6-succinyllysine; alternate. Position 24 is a phosphotyrosine (Tyr24). The residue at position 35 (Ser35) is a Phosphoserine. The residue at position 40 (Lys40) is an N6-succinyllysine. The residue at position 49 (Ser49) is a Phosphoserine. Residue His58 coordinates O2. His87 is a heme b binding site. Ser102 carries the post-translational modification Phosphoserine. Thr108 carries the phosphothreonine modification. Phosphoserine is present on residues Ser124 and Ser131. Thr134 and Thr137 each carry phosphothreonine. Ser138 bears the Phosphoserine mark.

It belongs to the globin family. Heterotetramer of two alpha chains and two beta chains. As to expression, red blood cells.

Functionally, involved in oxygen transport from the lung to the various peripheral tissues. In terms of biological role, hemopressin acts as an antagonist peptide of the cannabinoid receptor CNR1. Hemopressin-binding efficiently blocks cannabinoid receptor CNR1 and subsequent signaling. This chain is Hemoglobin subunit alpha (HBA), found in Leontocebus fuscicollis (Brown-mantled tamarin).